The primary structure comprises 785 residues: Cation/H(+) antiporter 1 (785 aa).

12 helical membrane passes run 19 to 39, 44 to 64, 79 to 99, 112 to 132, 143 to 163, 179 to 199, 201 to 221, 240 to 260, 294 to 314, 323 to 343, 352 to 372, and 389 to 409; these read LNTM…FYLF, GQAG…LTII, YYIF…GLEI, IVIT…FLWF, FLTF…PVVI, LAIS…TIVL, FISG…GVII, YLSK…ALTI, YPIH…RFSV, LVLG…VLFA, QYWL…LVLL, and MFVA…SLLL.

This sequence belongs to the monovalent cation:proton antiporter 2 (CPA2) transporter (TC 2.A.37) family. CHX (TC 2.A.37.4) subfamily. As to expression, specifically expressed in pollen.

The protein resides in the membrane. Functionally, may operate as a cation/H(+) antiporter. This Arabidopsis thaliana (Mouse-ear cress) protein is Cation/H(+) antiporter 1 (CHX1).